The chain runs to 150 residues: Endoribonuclease YbeY (150 aa).

Residues His113, His117, and His123 each contribute to the Zn(2+) site.

The protein belongs to the endoribonuclease YbeY family. It depends on Zn(2+) as a cofactor.

It is found in the cytoplasm. Its function is as follows. Single strand-specific metallo-endoribonuclease involved in late-stage 70S ribosome quality control and in maturation of the 3' terminus of the 16S rRNA. The chain is Endoribonuclease YbeY from Malacoplasma penetrans (strain HF-2) (Mycoplasma penetrans).